The following is a 157-amino-acid chain: MKCPHCGNNGSRVVDSRPTDEGRVIRRRRECEKCGFRFTTFERVEATPLLVIKKNGSREEFDRDKILKGIVRAAEKRPLNMEQMTDMVDKVENKVRSLGESEISSQIIGEYVMNILVDLDEIAYIRFASVYRQFKDMHVFLDELQDMMKKDEEKEKE.

Residues 1–21 form a disordered region; the sequence is MKCPHCGNNGSRVVDSRPTDE. The segment at 3–34 is a zinc-finger region; sequence CPHCGNNGSRVVDSRPTDEGRVIRRRRECEKC. Residues 49–139 enclose the ATP-cone domain; that stretch reads LLVIKKNGSR…VYRQFKDMHV (91 aa).

The protein belongs to the NrdR family. The cofactor is Zn(2+).

In terms of biological role, negatively regulates transcription of bacterial ribonucleotide reductase nrd genes and operons by binding to NrdR-boxes. This chain is Transcriptional repressor NrdR, found in Pediococcus pentosaceus (strain ATCC 25745 / CCUG 21536 / LMG 10740 / 183-1w).